The following is a 71-amino-acid chain: Mitotic-spindle organizing protein 1 (71 aa).

Belongs to the MOZART1 family. In terms of assembly, part of the gamma-tubulin complex.

It localises to the cytoplasm. Its subcellular location is the cytoskeleton. It is found in the microtubule organizing center. The protein resides in the spindle pole body. Its function is as follows. Required for gamma-tubulin complex recruitment to the microtubule organizing center (MTOC). This is Mitotic-spindle organizing protein 1 from Aspergillus clavatus (strain ATCC 1007 / CBS 513.65 / DSM 816 / NCTC 3887 / NRRL 1 / QM 1276 / 107).